The following is a 64-amino-acid chain: Large ribosomal subunit protein bL35 (64 aa).

It belongs to the bacterial ribosomal protein bL35 family.

The polypeptide is Large ribosomal subunit protein bL35 (Pseudomonas entomophila (strain L48)).